We begin with the raw amino-acid sequence, 569 residues long: Formate hydrogenlyase subunit 5 (569 aa).

Residues 538–569 constitute a propeptide that is removed on maturation; that stretch reads MTVVDVRKKKSKVVPYKELERYSIERKNSPLK.

It belongs to the complex I 49 kDa subunit family. FHL comprises of a formate dehydrogenase, unidentified electron carriers and a hydrogenase (isoenzyme 3). In this non-energy conserving pathway molecular hydrogen and carbodioxide from formate are released. [4Fe-4S] cluster is required as a cofactor. The cofactor is Ni(2+).

In Escherichia coli (strain K12), this protein is Formate hydrogenlyase subunit 5 (hycE).